A 383-amino-acid chain; its full sequence is Meiotic recombination protein SPO11-2 (383 aa).

Positions 24 to 167 constitute a Topo IIA-type catalytic domain; it reads LLPHEARARI…LGIMASSRGL (144 aa). The active-site O-(5'-phospho-DNA)-tyrosine intermediate is Tyr-124. Residues Glu-217 and Asp-270 each contribute to the Mg(2+) site.

This sequence belongs to the TOP6A family. As to quaternary structure, heterotetramer of 2 SPO11 (SPO11-1 and/or SPO11-2) and 2 MTOPVIB chains. Interacts with MTOPVIB. May form a heterodimer with SPO11-1. Interacts with PRD1. Does not interact with TOP6B. Mg(2+) serves as cofactor. In terms of tissue distribution, very low expression in flowers and shoots.

It localises to the nucleus. It catalyses the reaction ATP-dependent breakage, passage and rejoining of double-stranded DNA.. Its function is as follows. Component of a topoisomerase 6 complex specifically required for meiotic recombination. Together with MTOPVIB, mediates DNA cleavage that forms the double-strand breaks (DSB) that initiate meiotic recombination. The complex promotes relaxation of negative and positive supercoiled DNA and DNA decatenation through cleavage and ligation cycles. In Arabidopsis thaliana (Mouse-ear cress), this protein is Meiotic recombination protein SPO11-2 (SPO11-2).